The chain runs to 394 residues: Guanine nucleotide-binding protein G(s) subunit alpha (394 aa).

The tract at residues 1–23 (MGCLGNSKTEDQRNEEKAQREAN) is disordered. The N-palmitoyl glycine moiety is linked to residue G2. The S-palmitoyl cysteine moiety is linked to residue C3. The span at 8–23 (KTEDQRNEEKAQREAN) shows a compositional bias: basic and acidic residues. The 356-residue stretch at 39–394 (ATHRLLLLGA…RMHLRQYELL (356 aa)) folds into the G-alpha domain. Residues 42 to 55 (RLLLLGAGESGKST) form a G1 motif region. 47–55 (GAGESGKST) lines the GTP pocket. S54 contacts Mg(2+). The tract at residues 68 to 90 (FNGEGGEEDPQAARSNSDGEKAT) is disordered. The tract at residues 196–204 (DLLRCRVLT) is G2 motif. GTP contacts are provided by residues 197-204 (LLRCRVLT), 223-227 (DVGGQ), 292-295 (NKQD), and A366. Residue T204 participates in Mg(2+) binding. The segment at 219–228 (FHMFDVGGQR) is G3 motif. Residues 288 to 295 (ILFLNKQD) are G4 motif. The tract at residues 364–369 (TCAVDT) is G5 motif.

Belongs to the G-alpha family. G(s) subfamily. In terms of assembly, heterotrimeric G proteins are composed of 3 units; alpha, beta and gamma. The alpha chain contains the guanine nucleotide binding site. Interacts with CRY1; the interaction may block GPCR-mediated regulation of cAMP concentrations. Interacts with ADCY6 and stimulates its adenylyl cyclase activity. Interacts with ADCY2 and ADCY5. Stimulates the ADCY5 adenylyl cyclase activity. Interaction with SASH1.

The protein resides in the cell membrane. Guanine nucleotide-binding proteins (G proteins) function as transducers in numerous signaling pathways controlled by G protein-coupled receptors (GPCRs). Signaling involves the activation of adenylyl cyclases, resulting in increased levels of the signaling molecule cAMP. GNAS functions downstream of several GPCRs, including beta-adrenergic receptors. Stimulates the Ras signaling pathway via RAPGEF2. The sequence is that of Guanine nucleotide-binding protein G(s) subunit alpha (GNAS) from Cricetulus griseus (Chinese hamster).